The following is a 133-amino-acid chain: ATP synthase epsilon chain (133 aa).

This sequence belongs to the ATPase epsilon chain family. In terms of assembly, F-type ATPases have 2 components, CF(1) - the catalytic core - and CF(0) - the membrane proton channel. CF(1) has five subunits: alpha(3), beta(3), gamma(1), delta(1), epsilon(1). CF(0) has three main subunits: a, b and c.

The protein localises to the cell membrane. Produces ATP from ADP in the presence of a proton gradient across the membrane. The chain is ATP synthase epsilon chain (atpC) from Clostridium acetobutylicum (strain ATCC 824 / DSM 792 / JCM 1419 / IAM 19013 / LMG 5710 / NBRC 13948 / NRRL B-527 / VKM B-1787 / 2291 / W).